A 286-amino-acid polypeptide reads, in one-letter code: Pheromone receptor transcription factor (286 aa).

An N-acetylserine modification is found at S2. Residue S2 is modified to Phosphoserine. One can recognise an MADS-box domain in the interval 18–72; the sequence is RRKIEIKFIENKTRRHVTFSKRKHGIMKKAFELSVLTGTQVLLLVVSETGLVYTF. The segment covering 97-119 has biased composition (acidic residues); sequence PDDEEEDEEEDGDDDDDDDDDGN. The disordered stretch occupies residues 97 to 137; sequence PDDEEEDEEEDGDDDDDDDDDGNDMQRQQPQQQQPQQQQQV. Low complexity predominate over residues 122 to 136; it reads QRQQPQQQQPQQQQQ. At S144 the chain carries Phosphoserine. The tract at residues 167–264 is disordered; that stretch reads LGGANPNQNS…QQAFANAASP (98 aa). The segment covering 171-246 has biased composition (low complexity); that stretch reads NPNQNSMIQQ…QQQQQQQQQP (76 aa).

As to quaternary structure, homodimer. Binds DNA with a high specificity in complex with mating-type protein ALPHA1. Also binds DNA with a high specificity as a heterotetramer consisting of an ALPHA2 dimer and an MCM1 dimer. Interacts with YHP1 and YOX1, possibly leading to its inactivation. Interacts with ARG80 and ARG82.

It localises to the nucleus. Functionally, transcription factor required for the efficient replication of minichromosomes and the transcriptional regulation of early cell cycle genes. Activates transcription of ECB-dependent genes during the G1/M phase. Genes that contain a ECB (early cell box) element in their transcription regulatory region are transcribed only during G1/M phases. Interacts with the alpha-2 repressor or with the alpha-1 activator thereby regulating the expression of mating-type-specific genes. With ARG80, ARG81 and ARG82, coordinates the expression of arginine anabolic and catabolic genes in response to arginine. The chain is Pheromone receptor transcription factor (MCM1) from Saccharomyces cerevisiae (strain ATCC 204508 / S288c) (Baker's yeast).